The chain runs to 179 residues: Ribosome-recycling factor (179 aa).

Belongs to the RRF family.

The protein localises to the cytoplasm. In terms of biological role, responsible for the release of ribosomes from messenger RNA at the termination of protein biosynthesis. May increase the efficiency of translation by recycling ribosomes from one round of translation to another. The sequence is that of Ribosome-recycling factor from Chlamydia muridarum (strain MoPn / Nigg).